The chain runs to 298 residues: Probable 2-(5''-triphosphoribosyl)-3'-dephosphocoenzyme-A synthase 2 (298 aa).

This sequence belongs to the CitG/MdcB family.

The catalysed reaction is 3'-dephospho-CoA + ATP = 2'-(5''-triphospho-alpha-D-ribosyl)-3'-dephospho-CoA + adenine. The polypeptide is Probable 2-(5''-triphosphoribosyl)-3'-dephosphocoenzyme-A synthase 2 (Salmonella typhi).